The chain runs to 387 residues: Paralemmin-1 (387 aa).

Residue Met-1 is modified to N-acetylmethionine. A coiled-coil region spans residues 9-101 (TSQQERLQAI…EKEIEVLERG (93 aa)). Basic and acidic residues-rich tracts occupy residues 31–41 (KRRQLEDERRQ) and 69–102 (DLRR…ERGD). The segment at 31-160 (KRRQLEDERR…VSNTPLRTVD (130 aa)) is disordered. Residues 104–117 (APATAKENAAAPSP) show a composition bias toward low complexity. 2 positions are modified to phosphoserine: Ser-116 and Ser-124. Phosphothreonine is present on residues Thr-141 and Thr-145. Ser-162 bears the Phosphoserine mark. Thr-243 carries the phosphothreonine modification. Phosphoserine is present on Ser-245. Disordered regions lie at residues 247–296 (AGST…GQEP) and 335–378 (AEPK…DMKK). Low complexity predominate over residues 286–296 (GPPGIQPGQEP). A Phosphoserine modification is found at Ser-346. Thr-367 carries the post-translational modification Phosphothreonine. Ser-369 bears the Phosphoserine mark. Residues Cys-381 and Cys-383 are each lipidated (S-palmitoyl cysteine). At Cys-384 the chain carries Cysteine methyl ester. A lipid anchor (S-farnesyl cysteine) is attached at Cys-384. The propeptide at 385–387 (SIM) is removed in mature form.

It belongs to the paralemmin family. Interacts with dopamine receptor DRD3. Widely expressed with highest expression in brain and testis and intermediate expression in heart and adrenal gland.

The protein resides in the cell membrane. It is found in the cell projection. It localises to the filopodium membrane. Its subcellular location is the axon. The protein localises to the dendrite. The protein resides in the dendritic spine. It is found in the basolateral cell membrane. It localises to the apicolateral cell membrane. Functionally, involved in plasma membrane dynamics and cell process formation. Isoform 1 and isoform 2 are necessary for axonal and dendritic filopodia induction, for dendritic spine maturation and synapse formation in a palmitoylation-dependent manner. This Homo sapiens (Human) protein is Paralemmin-1 (PALM).